The primary structure comprises 438 residues: Porin AaxA (438 aa).

Positions 1–21 are cleaved as a signal peptide; that stretch reads MISFRFLLLSGLCALGISSYA.

Belongs to the OprB family.

The protein resides in the cell outer membrane. In terms of biological role, facilitates L-arginine uptake, as part of the AaxABC system. The arginine uptake by the bacterium in the macrophage may be a virulence factor against the host innate immune response. The chain is Porin AaxA (aaxA) from Chlamydia pneumoniae (Chlamydophila pneumoniae).